The primary structure comprises 456 residues: Probable tRNA(Ile)-lysidine synthase (456 aa).

30-35 (SGGVDS) is a binding site for ATP.

Belongs to the tRNA(Ile)-lysidine synthase family.

It localises to the cytoplasm. The catalysed reaction is cytidine(34) in tRNA(Ile2) + L-lysine + ATP = lysidine(34) in tRNA(Ile2) + AMP + diphosphate + H(+). Its function is as follows. Ligates lysine onto the cytidine present at position 34 of the AUA codon-specific tRNA(Ile) that contains the anticodon CAU, in an ATP-dependent manner. Cytidine is converted to lysidine, thus changing the amino acid specificity of the tRNA from methionine to isoleucine. The chain is Probable tRNA(Ile)-lysidine synthase from Schizosaccharomyces pombe (strain 972 / ATCC 24843) (Fission yeast).